The following is a 209-amino-acid chain: Thymidine kinase (209 aa).

ATP contacts are provided by residues 9-16 (AAMNAGKS) and 88-91 (DEAQ). The Proton acceptor role is filled by E89. Positions 146, 148, 183, and 186 each coordinate Zn(2+).

Belongs to the thymidine kinase family. In terms of assembly, homotetramer.

The protein resides in the cytoplasm. It carries out the reaction thymidine + ATP = dTMP + ADP + H(+). In Legionella pneumophila (strain Lens), this protein is Thymidine kinase.